The chain runs to 65 residues: Small ribosomal subunit protein bS21B (65 aa).

Belongs to the bacterial ribosomal protein bS21 family.

The polypeptide is Small ribosomal subunit protein bS21B (Francisella tularensis subsp. holarctica (strain LVS)).